The following is a 157-amino-acid chain: F-box protein SNE (157 aa).

One can recognise an F-box domain in the interval P24–L70.

In terms of assembly, part of a SCF (ASK-cullin-F-box) protein ligase complex. Interacts directly with SKP1A and SKP1B. In terms of tissue distribution, highly expressed in flowers and at much lower level in seedlings, rosette leaves and green siliques.

It localises to the nucleus. It functions in the pathway protein modification; protein ubiquitination. Essential component of a SCF-type E3 ligase complex that positively regulates the gibberellin signaling pathway. Upon gibberellin treatment, such complex probably mediates the ubiquitination and subsequent degradation of DELLA proteins (GAI, RGA and RGL2), some repressors of the gibberellin pathway, leading to activate the pathway. Can partially complement the absence of GID2/SLY1. The chain is F-box protein SNE (SNE) from Arabidopsis thaliana (Mouse-ear cress).